A 473-amino-acid chain; its full sequence is Photosystem II CP43 reaction center protein (473 aa).

Positions methionine 1–glutamate 14 are excised as a propeptide. Threonine 15 bears the N-acetylthreonine mark. Threonine 15 is subject to Phosphothreonine. 5 consecutive transmembrane segments (helical) span residues leucine 69–alanine 93, leucine 134–asparagine 155, lysine 178–threonine 200, lysine 255–serine 275, and tryptophan 291–alanine 312. Position 367 (glutamate 367) interacts with [CaMn4O5] cluster. The chain crosses the membrane as a helical span at residues arginine 447–proline 471.

This sequence belongs to the PsbB/PsbC family. PsbC subfamily. As to quaternary structure, PSII is composed of 1 copy each of membrane proteins PsbA, PsbB, PsbC, PsbD, PsbE, PsbF, PsbH, PsbI, PsbJ, PsbK, PsbL, PsbM, PsbT, PsbX, PsbY, PsbZ, Psb30/Ycf12, at least 3 peripheral proteins of the oxygen-evolving complex and a large number of cofactors. It forms dimeric complexes. Binds multiple chlorophylls and provides some of the ligands for the Ca-4Mn-5O cluster of the oxygen-evolving complex. It may also provide a ligand for a Cl- that is required for oxygen evolution. PSII binds additional chlorophylls, carotenoids and specific lipids. is required as a cofactor.

Its subcellular location is the plastid. The protein resides in the chloroplast thylakoid membrane. One of the components of the core complex of photosystem II (PSII). It binds chlorophyll and helps catalyze the primary light-induced photochemical processes of PSII. PSII is a light-driven water:plastoquinone oxidoreductase, using light energy to abstract electrons from H(2)O, generating O(2) and a proton gradient subsequently used for ATP formation. This is Photosystem II CP43 reaction center protein from Phaseolus vulgaris (Kidney bean).